Consider the following 81-residue polypeptide: Serine protease inhibitor Kazal-type 2 (81 aa).

The signal sequence occupies residues 1–21 (MALAVLRLALLLLAVTFAGPL). The 55-residue stretch at 27–81 (KYKTPFCARYQLPGCPRDFNPVCGTDMITYPNECTLCMKIRESGQNIKILRRGPC) folds into the Kazal-like domain. Cystine bridges form between Cys33–Cys63, Cys41–Cys60, and Cys49–Cys81.

As to expression, more abundant in epididymis than in testis.

The protein localises to the secreted. It is found in the cytoplasmic vesicle. The protein resides in the secretory vesicle. Its subcellular location is the acrosome. Strong inhibitor of acrosin in male and/or female genital tract. Also inhibits trypsin. Functionally, as a strong inhibitor of acrosin, it is required for normal spermiogenesis. It probably hinders premature activation of proacrosin and other proteases, thus preventing the cascade of events leading to spermiogenesis defects. May be involved in the regulation of serine protease-dependent germ cell apoptosis. It also inhibits trypsin. This is Serine protease inhibitor Kazal-type 2 (SPINK2) from Macaca fascicularis (Crab-eating macaque).